Here is a 191-residue protein sequence, read N- to C-terminus: Inosine triphosphate pyrophosphatase (191 aa).

ITP is bound at residue 12–17 (TGNKNK). Glutamate 40 is a Mg(2+) binding site. ITP-binding positions include lysine 52, 68–69 (DS), lysine 85, 144–147 (FGWE), lysine 167, and 172–173 (HR).

This sequence belongs to the HAM1 NTPase family. Homodimer. Mg(2+) is required as a cofactor. Mn(2+) serves as cofactor.

The protein resides in the cytoplasm. It localises to the nucleus. The catalysed reaction is ITP + H2O = IMP + diphosphate + H(+). It carries out the reaction dITP + H2O = dIMP + diphosphate + H(+). The enzyme catalyses XTP + H2O = XMP + diphosphate + H(+). Pyrophosphatase that hydrolyzes non-canonical purine nucleotides such as inosine triphosphate (ITP), deoxyinosine triphosphate (dITP) or xanthosine 5'-triphosphate (XTP) to their respective monophosphate derivatives. The enzyme does not distinguish between the deoxy- and ribose forms. Probably excludes non-canonical purines from RNA and DNA precursor pools, thus preventing their incorporation into RNA and DNA and avoiding chromosomal lesions. This is Inosine triphosphate pyrophosphatase from Aspergillus oryzae (strain ATCC 42149 / RIB 40) (Yellow koji mold).